Reading from the N-terminus, the 152-residue chain is Large ribosomal subunit protein uL15 (152 aa).

Positions 1–57 (MTSTLNTLKSNSGSRKKKLRKGRGIAAGQGASCGFGMRGQKSRSGRPTRPGFEGGQM) are disordered. The span at 14-23 (SRKKKLRKGR) shows a compositional bias: basic residues. Residues 25–37 (IAAGQGASCGFGM) are compositionally biased toward gly residues.

It belongs to the universal ribosomal protein uL15 family. Part of the 50S ribosomal subunit.

In terms of biological role, binds to the 23S rRNA. In Prochlorococcus marinus (strain MIT 9215), this protein is Large ribosomal subunit protein uL15.